The sequence spans 294 residues: Protoheme IX farnesyltransferase (294 aa).

The next 9 helical transmembrane spans lie at 24–44, 48–68, 96–116, 118–138, 146–166, 172–192, 224–244, 245–265, and 268–288; these read VVLL…PGWV, LIAF…AINH, ALWF…LFVN, LTAL…TGYL, IVIG…AVTG, ALLL…ALAI, VLLL…WIYL, LGAL…YFTD, and VVAM…FVFL.

This sequence belongs to the UbiA prenyltransferase family. Protoheme IX farnesyltransferase subfamily.

It is found in the cell inner membrane. It catalyses the reaction heme b + (2E,6E)-farnesyl diphosphate + H2O = Fe(II)-heme o + diphosphate. It participates in porphyrin-containing compound metabolism; heme O biosynthesis; heme O from protoheme: step 1/1. Functionally, converts heme B (protoheme IX) to heme O by substitution of the vinyl group on carbon 2 of heme B porphyrin ring with a hydroxyethyl farnesyl side group. The protein is Protoheme IX farnesyltransferase of Legionella pneumophila (strain Paris).